The chain runs to 296 residues: Protoheme IX farnesyltransferase (296 aa).

Helical transmembrane passes span 14–34, 36–56, 75–95, 99–119, 133–153, 163–183, 209–229, 234–254, and 265–285; these read IIFG…KGVI, YPLF…GCVF, VLVK…ILGI, LLLY…GFVI, VYGT…GYCA, LILL…IAIF, ITLY…SGYA, LVVA…GYKA, and FVFS…DFNV.

This sequence belongs to the UbiA prenyltransferase family. Protoheme IX farnesyltransferase subfamily.

It localises to the cell inner membrane. It catalyses the reaction heme b + (2E,6E)-farnesyl diphosphate + H2O = Fe(II)-heme o + diphosphate. It functions in the pathway porphyrin-containing compound metabolism; heme O biosynthesis; heme O from protoheme: step 1/1. Converts heme B (protoheme IX) to heme O by substitution of the vinyl group on carbon 2 of heme B porphyrin ring with a hydroxyethyl farnesyl side group. The chain is Protoheme IX farnesyltransferase from Yersinia enterocolitica serotype O:8 / biotype 1B (strain NCTC 13174 / 8081).